A 170-amino-acid chain; its full sequence is Thioredoxin-like protein YneN (170 aa).

A helical membrane pass occupies residues 5–23; that stretch reads WLAGILLIMLVGYTGWNLY. The region spanning 33-170 is the Thioredoxin domain; it reads IQEGQQAPDF…KEMEQKLDLD (138 aa). Cys-71 and Cys-74 form a disulfide bridge.

It belongs to the thioredoxin family.

It localises to the cell membrane. The polypeptide is Thioredoxin-like protein YneN (yneN) (Bacillus subtilis (strain 168)).